Here is a 180-residue protein sequence, read N- to C-terminus: Large ribosomal subunit protein uL5 (180 aa).

This sequence belongs to the universal ribosomal protein uL5 family. In terms of assembly, part of the 50S ribosomal subunit; part of the 5S rRNA/L5/L18/L25 subcomplex. Contacts the 5S rRNA and the P site tRNA. Forms a bridge to the 30S subunit in the 70S ribosome.

Functionally, this is one of the proteins that bind and probably mediate the attachment of the 5S RNA into the large ribosomal subunit, where it forms part of the central protuberance. In the 70S ribosome it contacts protein S13 of the 30S subunit (bridge B1b), connecting the 2 subunits; this bridge is implicated in subunit movement. Contacts the P site tRNA; the 5S rRNA and some of its associated proteins might help stabilize positioning of ribosome-bound tRNAs. The polypeptide is Large ribosomal subunit protein uL5 (Oenococcus oeni (strain ATCC BAA-331 / PSU-1)).